Consider the following 441-residue polypeptide: Glutamyl-tRNA reductase (441 aa).

Substrate contacts are provided by residues 49-52, Ser109, 114-116, and Gln120; these read TCNR and EDQ. The active-site Nucleophile is Cys50. 190 to 195 serves as a coordination point for NADP(+); that stretch reads GAGKMS.

Belongs to the glutamyl-tRNA reductase family. Homodimer.

It catalyses the reaction (S)-4-amino-5-oxopentanoate + tRNA(Glu) + NADP(+) = L-glutamyl-tRNA(Glu) + NADPH + H(+). It participates in porphyrin-containing compound metabolism; protoporphyrin-IX biosynthesis; 5-aminolevulinate from L-glutamyl-tRNA(Glu): step 1/2. In terms of biological role, catalyzes the NADPH-dependent reduction of glutamyl-tRNA(Glu) to glutamate 1-semialdehyde (GSA). The protein is Glutamyl-tRNA reductase of Moorella thermoacetica (strain ATCC 39073 / JCM 9320).